The following is a 1040-amino-acid chain: Alpha-mannosidase 2C1 (1040 aa).

4 residues coordinate Co(2+): H260, D262, D372, and H577. D372 serves as the catalytic Nucleophile.

It belongs to the glycosyl hydrolase 38 family. It depends on Co(2+) as a cofactor.

It is found in the cytoplasm. It catalyses the reaction Hydrolysis of terminal, non-reducing alpha-D-mannose residues in alpha-D-mannosides.. Its activity is regulated as follows. Strongly inhibited by swainsonine. Also inhibited to a lesser extent by deoxymannojirimycin (DMM). Its function is as follows. Cleaves alpha 1,2-, alpha 1,3-, and alpha 1,6-linked mannose residues on cytoplasmic free oligosaccharides generated by N-glycoprotein degradation pathways. In Homo sapiens (Human), this protein is Alpha-mannosidase 2C1 (MAN2C1).